The primary structure comprises 119 residues: Large ribosomal subunit protein bL20c (119 aa).

Belongs to the bacterial ribosomal protein bL20 family.

Its subcellular location is the plastid. The protein localises to the chloroplast. Binds directly to 23S ribosomal RNA and is necessary for the in vitro assembly process of the 50S ribosomal subunit. It is not involved in the protein synthesizing functions of that subunit. This is Large ribosomal subunit protein bL20c from Saccharum officinarum (Sugarcane).